The primary structure comprises 365 residues: Chorismate synthase (365 aa).

Arginine 46 contributes to the NADP(+) binding site. FMN is bound by residues 124-126, glycine 284, 299-303, and arginine 326; these read RAS and KPTPS.

Belongs to the chorismate synthase family. It depends on FMNH2 as a cofactor.

It catalyses the reaction 5-O-(1-carboxyvinyl)-3-phosphoshikimate = chorismate + phosphate. Its pathway is metabolic intermediate biosynthesis; chorismate biosynthesis; chorismate from D-erythrose 4-phosphate and phosphoenolpyruvate: step 7/7. Its function is as follows. Catalyzes the anti-1,4-elimination of the C-3 phosphate and the C-6 proR hydrogen from 5-enolpyruvylshikimate-3-phosphate (EPSP) to yield chorismate, which is the branch point compound that serves as the starting substrate for the three terminal pathways of aromatic amino acid biosynthesis. This reaction introduces a second double bond into the aromatic ring system. The protein is Chorismate synthase of Pyrobaculum islandicum (strain DSM 4184 / JCM 9189 / GEO3).